The sequence spans 303 residues: Pantothenate synthetase (303 aa).

Residues 1–21 (MIATGHGGAERRTTAGDGTAR) are disordered. 48-55 (MGALHDGH) contributes to the ATP binding site. Histidine 55 functions as the Proton donor in the catalytic mechanism. Residue glutamine 79 coordinates (R)-pantoate. Position 79 (glutamine 79) interacts with beta-alanine. ATP is bound at residue 165–168 (GRKD). Glutamine 171 is a binding site for (R)-pantoate. 202–205 (ASSR) contributes to the ATP binding site.

This sequence belongs to the pantothenate synthetase family. As to quaternary structure, homodimer.

The protein localises to the cytoplasm. It carries out the reaction (R)-pantoate + beta-alanine + ATP = (R)-pantothenate + AMP + diphosphate + H(+). It functions in the pathway cofactor biosynthesis; (R)-pantothenate biosynthesis; (R)-pantothenate from (R)-pantoate and beta-alanine: step 1/1. In terms of biological role, catalyzes the condensation of pantoate with beta-alanine in an ATP-dependent reaction via a pantoyl-adenylate intermediate. This is Pantothenate synthetase from Acidothermus cellulolyticus (strain ATCC 43068 / DSM 8971 / 11B).